The sequence spans 291 residues: 4-hydroxy-tetrahydrodipicolinate synthase (291 aa).

Thr44 contacts pyruvate. The active-site Proton donor/acceptor is the Tyr132. The Schiff-base intermediate with substrate role is filled by Lys160. Ile202 is a binding site for pyruvate.

The protein belongs to the DapA family. Homotetramer; dimer of dimers.

The protein resides in the cytoplasm. The catalysed reaction is L-aspartate 4-semialdehyde + pyruvate = (2S,4S)-4-hydroxy-2,3,4,5-tetrahydrodipicolinate + H2O + H(+). Its pathway is amino-acid biosynthesis; L-lysine biosynthesis via DAP pathway; (S)-tetrahydrodipicolinate from L-aspartate: step 3/4. Catalyzes the condensation of (S)-aspartate-beta-semialdehyde [(S)-ASA] and pyruvate to 4-hydroxy-tetrahydrodipicolinate (HTPA). This chain is 4-hydroxy-tetrahydrodipicolinate synthase, found in Parvibaculum lavamentivorans (strain DS-1 / DSM 13023 / NCIMB 13966).